Here is a 505-residue protein sequence, read N- to C-terminus: uncharacterized protein (505 aa).

Positions 1-52 are disordered; the sequence is MVDGSIHVPVQSHEGQHDNSSSLNEEIQTSQDPLGIVESYQESSTSDFDKSH. Over residues 18–32 the composition is skewed to polar residues; it reads DNSSSLNEEIQTSQD. Helical transmembrane passes span 141–161, 173–193, 208–228, 235–255, 265–285, 290–310, 326–346, 362–382, 389–409, and 415–435; these read FWIV…TNTF, AFQT…YTVF, GWKY…VVLA, LSAS…SFIF, ILGV…DVIS, SAVN…CYGV, VVIG…TFIF, GYLA…PILF, FYNI…IHVF, and WLYP…HVFV. Phosphoserine is present on residues Ser-463, Ser-466, and Ser-467.

Belongs to the SLC35F solute transporter family.

The protein localises to the golgi apparatus membrane. This is an uncharacterized protein from Schizosaccharomyces pombe (strain 972 / ATCC 24843) (Fission yeast).